A 593-amino-acid chain; its full sequence is Proline--tRNA ligase (593 aa).

It belongs to the class-II aminoacyl-tRNA synthetase family. ProS type 1 subfamily. In terms of assembly, homodimer.

It localises to the cytoplasm. The catalysed reaction is tRNA(Pro) + L-proline + ATP = L-prolyl-tRNA(Pro) + AMP + diphosphate. Functionally, catalyzes the attachment of proline to tRNA(Pro) in a two-step reaction: proline is first activated by ATP to form Pro-AMP and then transferred to the acceptor end of tRNA(Pro). As ProRS can inadvertently accommodate and process non-cognate amino acids such as alanine and cysteine, to avoid such errors it has two additional distinct editing activities against alanine. One activity is designated as 'pretransfer' editing and involves the tRNA(Pro)-independent hydrolysis of activated Ala-AMP. The other activity is designated 'posttransfer' editing and involves deacylation of mischarged Ala-tRNA(Pro). The misacylated Cys-tRNA(Pro) is not edited by ProRS. This chain is Proline--tRNA ligase, found in Synechococcus sp. (strain CC9605).